The primary structure comprises 170 residues: Peptide deformylase (170 aa).

Residues cysteine 91 and histidine 133 each coordinate Fe cation. Glutamate 134 is an active-site residue. Position 137 (histidine 137) interacts with Fe cation.

The protein belongs to the polypeptide deformylase family. The cofactor is Fe(2+).

It catalyses the reaction N-terminal N-formyl-L-methionyl-[peptide] + H2O = N-terminal L-methionyl-[peptide] + formate. Removes the formyl group from the N-terminal Met of newly synthesized proteins. Requires at least a dipeptide for an efficient rate of reaction. N-terminal L-methionine is a prerequisite for activity but the enzyme has broad specificity at other positions. In Glaesserella parasuis serovar 5 (strain SH0165) (Haemophilus parasuis), this protein is Peptide deformylase.